The sequence spans 714 residues: Fatty acid oxidation complex subunit alpha (714 aa).

Residues 1 to 190 (MEMASAFTLN…KLGLVDDVVP (190 aa)) form an enoyl-CoA hydratase region. The tract at residues 306 to 714 (APLNSVGILG…FWKTTATDLQ (409 aa)) is 3-hydroxyacyl-CoA dehydrogenase.

The protein in the N-terminal section; belongs to the enoyl-CoA hydratase/isomerase family. This sequence in the central section; belongs to the 3-hydroxyacyl-CoA dehydrogenase family. In terms of assembly, heterotetramer of two alpha chains (FadJ) and two beta chains (FadI).

Its subcellular location is the cytoplasm. It catalyses the reaction a (3S)-3-hydroxyacyl-CoA = a (2E)-enoyl-CoA + H2O. The enzyme catalyses a 4-saturated-(3S)-3-hydroxyacyl-CoA = a (3E)-enoyl-CoA + H2O. It carries out the reaction a (3S)-3-hydroxyacyl-CoA + NAD(+) = a 3-oxoacyl-CoA + NADH + H(+). The catalysed reaction is (3S)-3-hydroxybutanoyl-CoA = (3R)-3-hydroxybutanoyl-CoA. It functions in the pathway lipid metabolism; fatty acid beta-oxidation. In terms of biological role, catalyzes the formation of a hydroxyacyl-CoA by addition of water on enoyl-CoA. Also exhibits 3-hydroxyacyl-CoA epimerase and 3-hydroxyacyl-CoA dehydrogenase activities. This is Fatty acid oxidation complex subunit alpha from Escherichia coli O127:H6 (strain E2348/69 / EPEC).